Here is a 323-residue protein sequence, read N- to C-terminus: Elongation factor P--(R)-beta-lysine ligase (323 aa).

Ser76–Glu78 provides a ligand contact to substrate. ATP-binding positions include Arg100–Glu102 and Asn109. Tyr118 serves as a coordination point for substrate. Glu242 to Leu243 provides a ligand contact to ATP. Residue Glu249 coordinates substrate. Gly298 provides a ligand contact to ATP.

The protein belongs to the class-II aminoacyl-tRNA synthetase family. EpmA subfamily. Homodimer.

The enzyme catalyses D-beta-lysine + L-lysyl-[protein] + ATP = N(6)-((3R)-3,6-diaminohexanoyl)-L-lysyl-[protein] + AMP + diphosphate + H(+). Its function is as follows. With EpmB is involved in the beta-lysylation step of the post-translational modification of translation elongation factor P (EF-P). Catalyzes the ATP-dependent activation of (R)-beta-lysine produced by EpmB, forming a lysyl-adenylate, from which the beta-lysyl moiety is then transferred to the epsilon-amino group of a conserved specific lysine residue in EF-P. The sequence is that of Elongation factor P--(R)-beta-lysine ligase from Pasteurella multocida (strain Pm70).